A 427-amino-acid chain; its full sequence is 3-phosphoshikimate 1-carboxyvinyltransferase (427 aa).

3-phosphoshikimate contacts are provided by K22, S23, and R27. K22 contributes to the phosphoenolpyruvate binding site. G96 and R124 together coordinate phosphoenolpyruvate. 7 residues coordinate 3-phosphoshikimate: S169, S170, Q171, S197, D313, N336, and K340. Position 171 (Q171) interacts with phosphoenolpyruvate. The Proton acceptor role is filled by D313. R344, R386, and K411 together coordinate phosphoenolpyruvate.

Belongs to the EPSP synthase family. In terms of assembly, monomer.

Its subcellular location is the cytoplasm. It carries out the reaction 3-phosphoshikimate + phosphoenolpyruvate = 5-O-(1-carboxyvinyl)-3-phosphoshikimate + phosphate. The protein operates within metabolic intermediate biosynthesis; chorismate biosynthesis; chorismate from D-erythrose 4-phosphate and phosphoenolpyruvate: step 6/7. Catalyzes the transfer of the enolpyruvyl moiety of phosphoenolpyruvate (PEP) to the 5-hydroxyl of shikimate-3-phosphate (S3P) to produce enolpyruvyl shikimate-3-phosphate and inorganic phosphate. This Klebsiella pneumoniae (strain 342) protein is 3-phosphoshikimate 1-carboxyvinyltransferase.